Reading from the N-terminus, the 188-residue chain is Acyl-acyl carrier protein thioesterase ATL2, chloroplastic (188 aa).

The transit peptide at 1–47 (MFQATSTGAQIMHAAFPRSWRRGHVLPLRSAKIFKPLACLELRGSTG) directs the protein to the chloroplast. Asp-64 is a catalytic residue.

This sequence belongs to the 4-hydroxybenzoyl-CoA thioesterase family. As to expression, expressed in endodermal and peridermal cells in young and mature roots, in boundaries of stem lateral organs and developing seeds.

Its subcellular location is the plastid. The protein resides in the chloroplast. In terms of biological role, acyl-ACP thioesterase involved in the production of fatty acids and beta-keto fatty acids. Can produce beta-keto fatty acids of medium chain (8:0 and 10:0) and small amounts of 8:0 fatty acid when expressed in a heterologous organism (E.coli). May play a role in suberin biosynthesis. The protein is Acyl-acyl carrier protein thioesterase ATL2, chloroplastic of Arabidopsis thaliana (Mouse-ear cress).